The chain runs to 312 residues: Olfactory receptor 6C74 (312 aa).

Over 1-23 the chain is Extracellular; it reads MRNHTTVANFILLGLTDDPQLQV. Residue asparagine 3 is glycosylated (N-linked (GlcNAc...) asparagine). A helical transmembrane segment spans residues 24–44; sequence IIFLLLFFTYMLSITGNLTII. Topologically, residues 45 to 63 are cytoplasmic; sequence TLTLLDLHLKTPMYFFLRN. Residues 64 to 84 traverse the membrane as a helical segment; sequence FSFLEVSFTTVYIPKFLVSMA. The Extracellular segment spans residues 85–95; the sequence is TGDKTISYNDC. Cysteine 95 and cysteine 177 form a disulfide bridge. The chain crosses the membrane as a helical span at residues 96-116; the sequence is AAQLFFTILLGATEFFLLAAM. Over 117 to 140 the chain is Cytoplasmic; sequence SYERYVAICKPLHYTTIMSSRVCS. The helical transmembrane segment at 141–161 threads the bilayer; that stretch reads LLVFASWMAGFLIIFPPLLMG. Residues 162-194 are Extracellular-facing; it reads LQLDFCAANTVDHFFCDVSPILQLSCTDTDIIE. The helical transmembrane segment at 195-215 threads the bilayer; the sequence is LMMLLSAILTLLVTLVLVILS. Over 216 to 237 the chain is Cytoplasmic; sequence YTNIIRTILKIPSSQQRKKAFS. The helical transmembrane segment at 238 to 258 threads the bilayer; sequence TCSSHMVVVSISYGSCIFMYV. At 259 to 269 the chain is on the extracellular side; that stretch reads KPSAKERVSLN. A helical membrane pass occupies residues 270 to 290; the sequence is KGIALLSTSVAPMLNPFIYTL. At 291-312 the chain is on the cytoplasmic side; sequence RNKQVKDVFKHTVKKIELFSMK.

It belongs to the G-protein coupled receptor 1 family.

It localises to the cell membrane. Odorant receptor. The protein is Olfactory receptor 6C74 (OR6C74) of Homo sapiens (Human).